The primary structure comprises 462 residues: G-patch domain and KOW motifs-containing protein homolog 1 (462 aa).

2 disordered regions span residues 1–26 and 182–218; these read MVEQ…KREE and LKLP…EEEK. The G-patch domain maps to 154–202; sequence IESFGLAILRGCNWKDGDGIGKNPQKVALKLPNRRPPGLGLGATPKNPV. The KOW 1 domain maps to 221–248; that stretch reads EIKVGSFIKVVDGRNKGVYGKVEGRDDD. The segment covering 289-305 has biased composition (basic and acidic residues); that stretch reads EYDKEKDRLETERKKLE. A disordered region spans residues 289 to 337; that stretch reads EYDKEKDRLETERKKLESQPPSTSTSQSSKDYKSKSSSSKHDKNSSEYE. A compositionally biased stretch (low complexity) spans 306 to 317; it reads SQPPSTSTSQSS. A compositionally biased stretch (basic and acidic residues) spans 318–337; that stretch reads KDYKSKSSSSKHDKNSSEYE. Residues 401–428 form the KOW 2 domain; sequence PREIGEKLMIVAGKRSGQLAVMLDKDKR.

It belongs to the MOS2 family.

It localises to the nucleus. The chain is G-patch domain and KOW motifs-containing protein homolog 1 from Caenorhabditis elegans.